A 581-amino-acid polypeptide reads, in one-letter code: Ezrin (581 aa).

Residues 2-295 (PKPINVRVTT…GNHELYMRRR (294 aa)) enclose the FERM domain. K60 carries the post-translational modification N6-acetyllysine. Positions 115–120 (IYCPPE) match the [IL]-x-C-x-x-[DE] motif motif. Y146 bears the Phosphotyrosine; by PDGFR mark. The segment at 244 to 581 (EIRNISFNDK…KQRIDEFEAM (338 aa)) is interaction with SCYL3. A coiled-coil region spans residues 302-462 (VQQMKAQARE…QDDLVKTREE (161 aa)). The tract at residues 306-341 (KAQAREEKHQKQLERQQLETEKKRRETVEREKEQMM) is disordered. A compositionally biased stretch (basic and acidic residues) spans 308-341 (QAREEKHQKQLERQQLETEKKRRETVEREKEQMM). A Phosphotyrosine; by PDGFR modification is found at Y354. Phosphoserine is present on S366. Phosphotyrosine is present on Y476. Residues 534–560 (SQARDENKRTHNDIIHNENMRQGRDKY) form a disordered region. A compositionally biased stretch (basic and acidic residues) spans 535–560 (QARDENKRTHNDIIHNENMRQGRDKY). The residue at position 562 (T562) is a Phosphothreonine; by ROCK2 and PKC/PRKCI.

In terms of assembly, interacts with PALS1 and NHERF2. Found in a complex with EZR, PODXL and NHERF2. Interacts with MCC, PLEKHG6, PODXL, SCYL3/PACE1, NHERF1 and TMEM8B. Interacts (when phosphorylated) with FES/FPS. Interacts with dimeric S100P, the interaction may be activating through unmasking of F-actin binding sites. Identified in complexes that contain VIM, EZR, AHNAK, BFSP1, BFSP2, ANK2, PLEC, PRX and spectrin. Detected in a complex composed of at least EZR, AHNAK, PPL and PRX. Interacts with PDPN (via cytoplasmic domain); activates RHOA and promotes epithelial-mesenchymal transition. Interacts with SPN/CD43 cytoplasmic tail, CD44 and ICAM2. Interacts with SLC9A3; interaction targets SLC9A3 to the apical membrane. Interacts with SLC9A1; regulates interactions of SLC9A1 with cytoskeletal and promotes stress fiber formation. Interacts with CLIC5; may work together in a complex which also includes RDX and MYO6 to stabilize linkages between the plasma membrane and subjacent actin cytoskeleton at the base of stereocilia. Phosphorylated by tyrosine-protein kinases. Phosphorylation by ROCK2 suppresses the head-to-tail association of the N-terminal and C-terminal halves resulting in an opened conformation which is capable of actin and membrane-binding. Post-translationally, S-nitrosylation is induced by interferon-gamma and oxidatively-modified low-densitity lipoprotein (LDL(ox)) possibly implicating the iNOS-S100A8/9 transnitrosylase complex. Detected in eye lens fiber cells (at protein level).

It localises to the apical cell membrane. It is found in the cell projection. The protein resides in the microvillus membrane. The protein localises to the ruffle membrane. Its subcellular location is the cytoplasm. It localises to the cell cortex. It is found in the cytoskeleton. The protein resides in the microvillus. Its activity is regulated as follows. A head-to-tail association, of the N-terminal and C-terminal halves results in a closed conformation (inactive form) which is incapable of actin or membrane-binding. Its function is as follows. Probably involved in connections of major cytoskeletal structures to the plasma membrane. In epithelial cells, required for the formation of microvilli and membrane ruffles on the apical pole. Along with PLEKHG6, required for normal macropinocytosis. In Bos taurus (Bovine), this protein is Ezrin (EZR).